Consider the following 223-residue polypeptide: Ribose-5-phosphate isomerase A (223 aa).

Residues 32–35 (TGST), 83–86 (DGAD), and 96–99 (KGGG) each bind substrate. E105 acts as the Proton acceptor in catalysis. Substrate is bound at residue K123.

The protein belongs to the ribose 5-phosphate isomerase family. In terms of assembly, homodimer.

It carries out the reaction aldehydo-D-ribose 5-phosphate = D-ribulose 5-phosphate. Its pathway is carbohydrate degradation; pentose phosphate pathway; D-ribose 5-phosphate from D-ribulose 5-phosphate (non-oxidative stage): step 1/1. Functionally, catalyzes the reversible conversion of ribose-5-phosphate to ribulose 5-phosphate. This Acinetobacter baumannii (strain AYE) protein is Ribose-5-phosphate isomerase A.